Here is a 460-residue protein sequence, read N- to C-terminus: Probable carboxylesterase 11 (460 aa).

Composition is skewed to polar residues over residues 26–35 (QSSGDESSSD) and 132–145 (NSYG…SPEA). Disordered stretches follow at residues 26–52 (QSSG…APNP) and 132–161 (NSYG…SSGG). The short motif at 173-175 (HGG) is the Involved in the stabilization of the negatively charged intermediate by the formation of the oxyanion hole element. Residues S289, D392, and H422 contribute to the active site.

The protein belongs to the 'GDXG' lipolytic enzyme family. Expressed in roots, leaves, stems, flowers and siliques.

It catalyses the reaction a carboxylic ester + H2O = an alcohol + a carboxylate + H(+). Functionally, carboxylesterase acting on esters with varying acyl chain length. The polypeptide is Probable carboxylesterase 11 (CXE11) (Arabidopsis thaliana (Mouse-ear cress)).